Here is a 353-residue protein sequence, read N- to C-terminus: MGVSSTTPHLLRAARGEVVDRPPVWMMRQAGRYMKAYRDLREKYPSFRDRSEIPDVAIEVSLQPWKAFQPDGVILFSDIVTPLPGLGIDMDIAEGKGPIIHSPLRTQEQIDRLHPLEPEAALPFIKTILQALRSEVGDKSTVLGFVGAPWTLAAYAVEGKGSKTYSIIKNMAFSDPTILHQLLTKLADAIAIYARYQIDSGAQVVQMFDSWAGQLSPQDYDTFALPYQQRVFQQVKQTHPDTPLILLVSGSAGVLERMAQSGADIVSVDWAVDMADARARLGKQVKVQGNLDPGVLFGSKQFIRDRILDTVRKAGNWGHILNLGHGVLPETPEENVAFFFETAKELNFAGVKN.

Residues 28 to 32 (RQAGR), D78, Y155, S210, and H325 each bind substrate.

Belongs to the uroporphyrinogen decarboxylase family. As to quaternary structure, homodimer.

It is found in the cytoplasm. The enzyme catalyses uroporphyrinogen III + 4 H(+) = coproporphyrinogen III + 4 CO2. It participates in porphyrin-containing compound metabolism; protoporphyrin-IX biosynthesis; coproporphyrinogen-III from 5-aminolevulinate: step 4/4. Its function is as follows. Catalyzes the decarboxylation of four acetate groups of uroporphyrinogen-III to yield coproporphyrinogen-III. This is Uroporphyrinogen decarboxylase from Nostoc punctiforme (strain ATCC 29133 / PCC 73102).